Here is a 407-residue protein sequence, read N- to C-terminus: 8-amino-7-oxononanoate synthase (407 aa).

R24 contributes to the substrate binding site. Residue 111–112 (GF) coordinates pyridoxal 5'-phosphate. H137 contributes to the substrate binding site. Residues S183, H211, and T239 each contribute to the pyridoxal 5'-phosphate site. K242 is subject to N6-(pyridoxal phosphate)lysine. A substrate-binding site is contributed by T356.

The protein belongs to the class-II pyridoxal-phosphate-dependent aminotransferase family. BioF subfamily. As to quaternary structure, homodimer. Requires pyridoxal 5'-phosphate as cofactor.

The catalysed reaction is 6-carboxyhexanoyl-[ACP] + L-alanine + H(+) = (8S)-8-amino-7-oxononanoate + holo-[ACP] + CO2. The protein operates within cofactor biosynthesis; biotin biosynthesis. In terms of biological role, catalyzes the decarboxylative condensation of pimeloyl-[acyl-carrier protein] and L-alanine to produce 8-amino-7-oxononanoate (AON), [acyl-carrier protein], and carbon dioxide. This Stenotrophomonas maltophilia (strain R551-3) protein is 8-amino-7-oxononanoate synthase.